We begin with the raw amino-acid sequence, 167 residues long: Small ribosomal subunit protein uS3m (167 aa).

Residues 1–35 (MAWSASVRGLGQRVLACSRELPGAWRTLHTSAVCA) constitute a mitochondrion transit peptide.

The protein belongs to the universal ribosomal protein uS3 family. As to quaternary structure, component of the mitochondrial ribosome small subunit (28S) which comprises a 12S rRNA and about 30 distinct proteins.

Its subcellular location is the mitochondrion. In Mus musculus (Mouse), this protein is Small ribosomal subunit protein uS3m (Mrps24).